A 215-amino-acid polypeptide reads, in one-letter code: Ribosomal RNA small subunit methyltransferase G (215 aa).

Residues glycine 71, leucine 76, and arginine 135 each coordinate S-adenosyl-L-methionine.

This sequence belongs to the methyltransferase superfamily. RNA methyltransferase RsmG family.

It is found in the cytoplasm. Functionally, specifically methylates the N7 position of a guanine in 16S rRNA. This Salinibacter ruber (strain DSM 13855 / M31) protein is Ribosomal RNA small subunit methyltransferase G.